The sequence spans 208 residues: MTKGILGKKVGMTQIFTESGEFIPVTVIEATPNVVLQVKTVETDGYEAVQVGFDDKREVLSNKPAKGHVAKADTAPKRFIREFKNIEGLEVGQEITVEQFEAGDVVDVTGTTKGKGFQGAIKRHGQSRGPMAHGSRYHRRPGSMGPVAPNRVFKGKNLAGRMGGNRVTVQNLEVVQVVPEKNVILIKGNVPGAKKSLIIIKSAVKAAK.

Residues 116-146 (GFQGAIKRHGQSRGPMAHGSRYHRRPGSMGP) form a disordered region.

Belongs to the universal ribosomal protein uL3 family. As to quaternary structure, part of the 50S ribosomal subunit. Forms a cluster with proteins L14 and L19.

Functionally, one of the primary rRNA binding proteins, it binds directly near the 3'-end of the 23S rRNA, where it nucleates assembly of the 50S subunit. This is Large ribosomal subunit protein uL3 from Streptococcus mutans serotype c (strain ATCC 700610 / UA159).